Reading from the N-terminus, the 745-residue chain is Prolyl oligopeptidase ophP (745 aa).

Catalysis depends on charge relay system residues S580, D665, and H701.

It belongs to the peptidase S9A family. In terms of assembly, monomer.

It carries out the reaction Hydrolysis of Pro-|-Xaa &gt;&gt; Ala-|-Xaa in oligopeptides.. It participates in mycotoxin biosynthesis. Prolyl oligopeptidase; part of the gene cluster that mediates the biosynthesis of omphalotin A, a highly methylated cyclic dodecapeptide with nematodicidal activity. Excises and catalyzes the macrocyclization of the methylated core peptide of OphMA to yield omphalotin A. OphP works in a two-step fashion with an initial cleavage at the N-terminus, followed by a second cleavage at the C-terminus of the core peptide. According to this mechanism, the free N-terminus of the core peptide, generated by the first cleavage, attacks the covalent intermediate of the second cleavage, which results in macrocyclization of the core peptide. The chain is Prolyl oligopeptidase ophP from Omphalotus olearius (Jack o'lantern).